Reading from the N-terminus, the 149-residue chain is Large ribosomal subunit protein bL9 (149 aa).

It belongs to the bacterial ribosomal protein bL9 family.

Its function is as follows. Binds to the 23S rRNA. The polypeptide is Large ribosomal subunit protein bL9 (Klebsiella pneumoniae (strain 342)).